Consider the following 114-residue polypeptide: Iron-sulfur cluster insertion protein ErpA (114 aa).

Residues Cys-42, Cys-106, and Cys-108 each coordinate iron-sulfur cluster.

It belongs to the HesB/IscA family. In terms of assembly, homodimer. Iron-sulfur cluster serves as cofactor.

Required for insertion of 4Fe-4S clusters for at least IspG. This chain is Iron-sulfur cluster insertion protein ErpA, found in Yersinia enterocolitica serotype O:8 / biotype 1B (strain NCTC 13174 / 8081).